A 298-amino-acid chain; its full sequence is tRNA pseudouridine synthase B (298 aa).

The Nucleophile role is filled by Asp-39.

It belongs to the pseudouridine synthase TruB family. Type 1 subfamily.

It catalyses the reaction uridine(55) in tRNA = pseudouridine(55) in tRNA. Responsible for synthesis of pseudouridine from uracil-55 in the psi GC loop of transfer RNAs. The protein is tRNA pseudouridine synthase B of Oenococcus oeni (strain ATCC BAA-331 / PSU-1).